Consider the following 447-residue polypeptide: MATTSSDRLIAGLTASIGSIESRYANPAQSVSLICRNQINGAPPIVLRSSRRSRLWLIEAIPPAKSWNGSNDGDEDIKKSDTRNYAIGGTGGHAVAGKDDRTMEIVIAAATTAALGVGNRVLYKLALIPLKQYPFFLAQLSTFGYVAVYFSILYFRYRAGIVTKEMLSVPKLPFLIVGVLESLALAAGMAAASNLSGPSTTVLSQTFLVWQILFSIIFLGRRYRINQILGCTLVAFGVIVSVASGSGAAHSFKDTGILWSLLMVFSFLLQGADTVMKEVIFLDSKKRLKGASLDLFVVNSYGSIFQVICIALLLPFLSKLWGIPFNQLPSYIRDGGACFLNIGSRITGCEGAPLLPVMFVMMNMAYNISLLRLIKISSAVVSSLASTVSVPIAVYCFTLPLPYLGVASTLPRGFVAGTIILVVGMLLYAWTPSTNTSDSIIPSPPST.

The N-terminal 48 residues, 1-48 (MATTSSDRLIAGLTASIGSIESRYANPAQSVSLICRNQINGAPPIVLR), are a transit peptide targeting the chloroplast. Transmembrane regions (helical) follow at residues 103–123 (MEIV…RVLY), 135–155 (FFLA…ILYF), 172–192 (LPFL…MAAA), 200–220 (TTVL…IFLG), 228–248 (ILGC…GSGA), 256–276 (GILW…DTVM), 304–324 (IFQV…WGIP), 351–371 (GAPL…ISLL), 387–407 (TVSV…LGVA), and 413–433 (GFVA…WTPS).

Belongs to the CRT-like transporter family.

It localises to the plastid. The protein localises to the chloroplast membrane. Involved in thiol transport from the plastid to the cytosol. Transports probably both glutathione (GSH) and its precursor, gamma-glutamylcysteine (gamma-EC). Exhibits some functional redundancy with CLT3 in maintaining the root GSH pool. This Arabidopsis thaliana (Mouse-ear cress) protein is Protein CLT1, chloroplastic.